The sequence spans 904 residues: Envelope glycoprotein (904 aa).

The Extracellular portion of the chain corresponds to 1–726; that stretch reads MDQDLDGAER…LFDWTSWKDW (726 aa). 15 N-linked (GlcNAc...) asparagine; by host glycosylation sites follow: Asn-131, Asn-255, Asn-277, Asn-296, Asn-329, Asn-367, Asn-376, Asn-385, Asn-410, Asn-427, Asn-432, Asn-452, Asn-491, Asn-509, and Asn-541. The segment at 556-576 is fusion peptide; it reads AVGLAIFLLVLAIMAITSSLV. The stretch at 588–638 forms a coiled coil; sequence AKVVERVVQNVSYIAQTQDQFTHLFRNINNRLNVLHHRVSYLEYVEEIRQK. Asn-597 is a glycosylation site (N-linked (GlcNAc...) asparagine; by host). The interval 615–631 is immunosuppression; it reads INNRLNVLHHRVSYLEY. N-linked (GlcNAc...) asparagine; by host glycosylation is found at Asn-663 and Asn-694. Residues 676-712 adopt a coiled-coil conformation; the sequence is DEYDKIEEKILKIRVDWLNSSLSDTQDTFGLETSIFD. A helical transmembrane segment spans residues 727 to 747; that stretch reads IKIIIVIIVLWLLIKILLGML. Over 748–904 the chain is Cytoplasmic; it reads RSCAKVSQNY…AWYEGLRGSQ (157 aa). Disordered stretches follow at residues 761–783 and 862–904; these read PAEE…PASG and GGTS…RGSQ. A compositionally biased stretch (polar residues) spans 878–887; it reads WTGSREQNNP.

In terms of assembly, the mature envelope protein (Env) consists of a trimer of SU-TM heterodimers attached by non-covalent interactions or by a labile interchain disulfide bond. Specific enzymatic cleavages in vivo yield mature proteins. Envelope glycoproteins are synthesized as an inactive precursor that is N-glycosylated and processed likely by host cell furin or by a furin-like protease in the Golgi to yield the mature SU and TM proteins. The cleavage site between SU and TM requires the minimal sequence [KR]-X-[KR]-R.

It localises to the virion membrane. The protein resides in the host cell membrane. Its function is as follows. The surface protein (SU) attaches the virus to the host cell by binding to its receptor. This interaction triggers the refolding of the transmembrane protein (TM) and is thought to activate its fusogenic potential by unmasking its fusion peptide. Fusion occurs at the host cell plasma membrane. Functionally, the transmembrane protein (TM) acts as a class I viral fusion protein. Under the current model, the protein has at least 3 conformational states: pre-fusion native state, pre-hairpin intermediate state, and post-fusion hairpin state. During viral and target cell membrane fusion, the coiled coil regions (heptad repeats) assume a trimer-of-hairpins structure, positioning the fusion peptide in close proximity to the C-terminal region of the ectodomain. The formation of this structure appears to drive apposition and subsequent fusion of viral and target cell membranes. Membranes fusion leads to delivery of the nucleocapsid into the cytoplasm. In Bovine immunodeficiency virus (strain R29) (BIV), this protein is Envelope glycoprotein (env).